The chain runs to 215 residues: ATP-dependent Clp protease proteolytic subunit (215 aa).

The active-site Nucleophile is the S115. Residue H140 is part of the active site.

It belongs to the peptidase S14 family. In terms of assembly, fourteen ClpP subunits assemble into 2 heptameric rings which stack back to back to give a disk-like structure with a central cavity, resembling the structure of eukaryotic proteasomes.

Its subcellular location is the cytoplasm. It catalyses the reaction Hydrolysis of proteins to small peptides in the presence of ATP and magnesium. alpha-casein is the usual test substrate. In the absence of ATP, only oligopeptides shorter than five residues are hydrolyzed (such as succinyl-Leu-Tyr-|-NHMec, and Leu-Tyr-Leu-|-Tyr-Trp, in which cleavage of the -Tyr-|-Leu- and -Tyr-|-Trp bonds also occurs).. Functionally, cleaves peptides in various proteins in a process that requires ATP hydrolysis. Has a chymotrypsin-like activity. Plays a major role in the degradation of misfolded proteins. This is ATP-dependent Clp protease proteolytic subunit from Anaplasma marginale (strain Florida).